We begin with the raw amino-acid sequence, 177 residues long: Preprotein translocase subunit SECE1 (177 aa).

The N-terminal 38 residues, 1-38 (MSLTAQFSPPVTGITRSLRDTKPSLSNLRVFPVYTEIR), are a transit peptide targeting the chloroplast. Residues 60 to 87 (RDTAGSESESEATPSPAEESGSGEDKEV) form a disordered region. Low complexity predominate over residues 64-79 (GSESESEATPSPAEES). A helical membrane pass occupies residues 140-160 (VVLGVIAGSSVVLLTVNFLLA).

Belongs to the SecE/SEC61-gamma family. As to quaternary structure, part of the Sec protein translocation apparatus. Interacts with SCY1 and ALB3.

Its subcellular location is the plastid. The protein resides in the chloroplast thylakoid membrane. Its function is as follows. Involved in the import/insertion pathway in the thylakoids. The signal recognition particle is not involved in the insertion of SECE1 in the thylakoid membrane. This is Preprotein translocase subunit SECE1 (SECE1) from Arabidopsis thaliana (Mouse-ear cress).